The primary structure comprises 471 residues: UDP-glycosyltransferase CGT (471 aa).

H24 (proton acceptor) is an active-site residue. H24 provides a ligand contact to an anthocyanidin. Catalysis depends on D120, which acts as the Charge relay. A UDP-alpha-D-glucose-binding site is contributed by T143. Positions S280–R281 are UDP. Residues V343, Q345, H360, W363, N364, S365, and E368 each coordinate UDP-alpha-D-glucose. An anthocyanidin is bound at residue G383. The UDP-alpha-D-glucose site is built by D384 and Q385.

The protein belongs to the UDP-glycosyltransferase family.

The enzyme catalyses a 3'-hydro-2'-hydroxy-beta-oxodihydrochalcone + UDP-alpha-D-glucose = a 3'-(beta-D-glucopyranosyl)-2'-hydroxy-beta-oxodihydrochalcone + UDP + H(+). In terms of biological role, UDP-glucose-dependent glucosyltransferase catalyzing the c-glucosylation of 2-hydroxyflavanones. The chain is UDP-glycosyltransferase CGT from Oryza sativa subsp. japonica (Rice).